A 355-amino-acid polypeptide reads, in one-letter code: NADH dehydrogenase-like protein YutJ (355 aa).

This sequence belongs to the NADH dehydrogenase family. FAD serves as cofactor.

This is NADH dehydrogenase-like protein YutJ (yutJ) from Bacillus subtilis (strain 168).